Consider the following 256-residue polypeptide: Triosephosphate isomerase (256 aa).

Residue asparagine 9–lysine 11 coordinates substrate. The active-site Electrophile is the histidine 97. Glutamate 169 acts as the Proton acceptor in catalysis. Residues glycine 175, serine 214, and glycine 235–glycine 236 each bind substrate.

The protein belongs to the triosephosphate isomerase family. In terms of assembly, homodimer.

The protein resides in the cytoplasm. It catalyses the reaction D-glyceraldehyde 3-phosphate = dihydroxyacetone phosphate. Its pathway is carbohydrate biosynthesis; gluconeogenesis. It functions in the pathway carbohydrate degradation; glycolysis; D-glyceraldehyde 3-phosphate from glycerone phosphate: step 1/1. In terms of biological role, involved in the gluconeogenesis. Catalyzes stereospecifically the conversion of dihydroxyacetone phosphate (DHAP) to D-glyceraldehyde-3-phosphate (G3P). In Vibrio parahaemolyticus serotype O3:K6 (strain RIMD 2210633), this protein is Triosephosphate isomerase.